The sequence spans 300 residues: Chaperone protein dnaJ 50 (300 aa).

A signal peptide spans Met1–Ala27. Over Ile28–Pro122 the chain is Lumenal. The region spanning Asp34 to Ile98 is the J domain. N-linked (GlcNAc...) asparagine glycosylation is found at Asn46 and Asn88. A helical transmembrane segment spans residues Arg123 to Ala143. At Arg144 to Ser206 the chain is on the cytoplasmic side. Residues Val207–Val227 form a helical membrane-spanning segment. Residues Trp228 to Arg300 are Lumenal-facing.

In terms of tissue distribution, expressed in leaves, flower buds and flowers.

It is found in the endoplasmic reticulum membrane. In terms of biological role, may play a role in protein folding in the endoplasmic reticulum. This chain is Chaperone protein dnaJ 50 (C50), found in Arabidopsis thaliana (Mouse-ear cress).